A 355-amino-acid chain; its full sequence is Sesquiterpene synthase MAJ_08936 (355 aa).

Mg(2+) contacts are provided by Asp-91 and Asp-96. Positions 91-96 (DDLFVD) match the DDXXXD motif motif. Substrate is bound at residue Arg-184. Mg(2+)-binding residues include Asn-230, Ser-234, and Glu-238.

It belongs to the terpene synthase family. Mg(2+) is required as a cofactor.

The enzyme catalyses (2E,6E)-farnesyl diphosphate + H2O = (+)-corvol ether B + diphosphate. It catalyses the reaction (2E,6E)-farnesyl diphosphate + H2O = (+)-corvol ether A + diphosphate. Functionally, terpene synthase that catalyzes the conversion of (2E,6E)-farnesyl diphosphate (FPP) into sesquiterpenes which are important for fungi-environment interactions. Produces a mixture consisting of 8 sesquiterpenes including corvol ethers A and B, as well as traces of epizonarene, gamma-cadinene, delta-cadinene, alpha-cadinene, alpha-cadinol, and an unidentified sesquiterpene. The major product is corvol ether A. The chain is Sesquiterpene synthase MAJ_08936 from Metarhizium majus (strain ARSEF 297).